The sequence spans 465 residues: A-type ATP synthase subunit B (465 aa).

This sequence belongs to the ATPase alpha/beta chains family. In terms of assembly, has multiple subunits with at least A(3), B(3), C, D, E, F, H, I and proteolipid K(x).

It localises to the cell membrane. Functionally, component of the A-type ATP synthase that produces ATP from ADP in the presence of a proton gradient across the membrane. The B chain is a regulatory subunit. This is A-type ATP synthase subunit B from Thermococcus kodakarensis (strain ATCC BAA-918 / JCM 12380 / KOD1) (Pyrococcus kodakaraensis (strain KOD1)).